A 315-amino-acid polypeptide reads, in one-letter code: GTP cyclohydrolase MptA (315 aa).

It belongs to the GTP cyclohydrolase IV family. As to quaternary structure, homodimer. Requires Fe(2+) as cofactor.

The catalysed reaction is GTP + H2O = 7,8-dihydroneopterin 2',3'-cyclic phosphate + formate + diphosphate + H(+). Its pathway is cofactor biosynthesis; 5,6,7,8-tetrahydromethanopterin biosynthesis. Converts GTP to 7,8-dihydro-D-neopterin 2',3'-cyclic phosphate, the first intermediate in the biosynthesis of coenzyme methanopterin. The sequence is that of GTP cyclohydrolase MptA from Methanococcus maripaludis (strain DSM 14266 / JCM 13030 / NBRC 101832 / S2 / LL).